The primary structure comprises 373 residues: 2-aminoethylphosphonate--pyruvate transaminase (373 aa).

Position 191 is an N6-(pyridoxal phosphate)lysine (K191).

Belongs to the class-V pyridoxal-phosphate-dependent aminotransferase family. PhnW subfamily. In terms of assembly, homodimer. Requires pyridoxal 5'-phosphate as cofactor.

The catalysed reaction is (2-aminoethyl)phosphonate + pyruvate = phosphonoacetaldehyde + L-alanine. Its function is as follows. Involved in phosphonate degradation. The protein is 2-aminoethylphosphonate--pyruvate transaminase of Burkholderia ambifaria (strain MC40-6).